A 398-amino-acid polypeptide reads, in one-letter code: LIM domain-binding protein 2 (398 aa).

Disordered stretches follow at residues 245–280 (PPAEPTRQTTTKRRKRKNSTNNASNSNAGNNATSAY) and 354–398 (DAAN…QASQ). Residues 263-279 (STNNASNSNAGNNATSA) are compositionally biased toward low complexity. The region spanning 323–362 (DVMVVGEPTLMGGEFGDEDERLITRLENTQYDAANGMDDE) is the LIM interaction domain (LID) domain.

The protein belongs to the LDB family. In terms of tissue distribution, expressed in adult brain, lung, spleen and kidney. Isoform b is generally expressed at a higher level than isoform a.

The protein resides in the nucleus. Its function is as follows. Binds to the LIM domain of a wide variety of LIM domain-containing transcription factors. This is LIM domain-binding protein 2 from Xenopus laevis (African clawed frog).